The sequence spans 157 residues: uncharacterized protein (157 aa).

Positions 36–63 (QIEELNELCQFFNISLTYTRESLEELEN) form a coiled coil.

This is an uncharacterized protein from Bacillus subtilis (strain 168).